Here is a 79-residue protein sequence, read N- to C-terminus: UPF0181 protein PC1_1931 (79 aa).

The disordered stretch occupies residues 54 to 79; the sequence is FDEDDDTVNDSDEEHYFDDGEEEDEQ.

Belongs to the UPF0181 family.

This chain is UPF0181 protein PC1_1931, found in Pectobacterium carotovorum subsp. carotovorum (strain PC1).